Here is a 124-residue protein sequence, read N- to C-terminus: Small ribosomal subunit protein uS12 (124 aa).

Aspartate 89 is subject to 3-methylthioaspartic acid. The segment at 104–124 (TQGVKNRGQARSRYGAKKEKK) is disordered. Over residues 111 to 124 (GQARSRYGAKKEKK) the composition is skewed to basic residues.

It belongs to the universal ribosomal protein uS12 family. In terms of assembly, part of the 30S ribosomal subunit. Contacts proteins S8 and S17. May interact with IF1 in the 30S initiation complex.

Its function is as follows. With S4 and S5 plays an important role in translational accuracy. In terms of biological role, interacts with and stabilizes bases of the 16S rRNA that are involved in tRNA selection in the A site and with the mRNA backbone. Located at the interface of the 30S and 50S subunits, it traverses the body of the 30S subunit contacting proteins on the other side and probably holding the rRNA structure together. The combined cluster of proteins S8, S12 and S17 appears to hold together the shoulder and platform of the 30S subunit. This Micrococcus luteus (strain ATCC 4698 / DSM 20030 / JCM 1464 / CCM 169 / CCUG 5858 / IAM 1056 / NBRC 3333 / NCIMB 9278 / NCTC 2665 / VKM Ac-2230) (Micrococcus lysodeikticus) protein is Small ribosomal subunit protein uS12.